The chain runs to 285 residues: Nucleotide-binding protein PSPTO_4456 (285 aa).

8–15 is an ATP binding site; sequence GRSGSGKS. Residue 60 to 63 coordinates GTP; the sequence is DARN.

This sequence belongs to the RapZ-like family.

Its function is as follows. Displays ATPase and GTPase activities. In Pseudomonas syringae pv. tomato (strain ATCC BAA-871 / DC3000), this protein is Nucleotide-binding protein PSPTO_4456.